Reading from the N-terminus, the 251-residue chain is MSDYVYELMKQHHSVRKFKNQPLGSETVEKLVEAGQSASTSSYLQTYSIIGVEDPSIKARLKEVSGQPYVLDNGYLFVFVLDYYRHHLVDEVAASNMETSYGSAEGLLVGTIDVALVAQNMAVAAEDMGYGIVYLGSLRNDVARVREILNLPDYTFPLFGMAVGEPSDEENGSPKPRLPFKHIFHKDQYDANQHQQRKELEAYDQVVSEYYKERTNGVRTENWSQQIETFLGRKTRLDMLDELKKAGFIKR.

This sequence belongs to the flavin oxidoreductase frp family. It depends on FMN as a cofactor.

Its function is as follows. Reduces FMN, organic nitro compounds and disulfide DTNB. Involved in maintenance of the cellular redox state and the disulfide stress response. This Staphylococcus epidermidis (strain ATCC 12228 / FDA PCI 1200) protein is NADPH-dependent oxidoreductase (nfrA).